A 1693-amino-acid chain; its full sequence is Latrophilin Cirl (1693 aa).

At 1–774 the chain is on the extracellular side; that stretch reads MVLQGAKQRL…LFTMFDGNMR (774 aa). Residues 30–119 enclose the SUEL-type lectin domain; sequence ACEGKKLTIE…KYLEAHYQCV (90 aa). N-linked (GlcNAc...) asparagine glycans are attached at residues Asn147, Asn260, Asn306, and Asn345. The disordered stretch occupies residues 190–309; that stretch reads PPATHATPPG…GPSVSSNGSA (120 aa). Polar residues-rich tracts occupy residues 259 to 269 and 287 to 309; these read SNATAPSNTRI and KSSPNRTPGTAASGPSVSSNGSA. Positions 379–406 are disordered; that stretch reads SFDEDDEEMAGTSTTTPMSTSGDCLHNS. A compositionally biased stretch (low complexity) spans 390-399; it reads TSTTTPMSTS. Asn405, Asn662, Asn710, and Asn737 each carry an N-linked (GlcNAc...) asparagine glycan. One can recognise a GAIN-B domain in the interval 568-761; the sequence is RSVVQKVKNI…AILMDVVDEH (194 aa). 2 disulfide bridges follow: Cys716/Cys743 and Cys731/Cys745. A GPS region spans residues 716-761; sequence CVFWNYIDHAWSANGCSLESTNRTHSVCSCNHLTNFAILMDVVDEH. Residues 775-795 traverse the membrane as a helical segment; that stretch reads IFIYISIAICVVFIVIALLTL. At 796-808 the chain is on the cytoplasmic side; that stretch reads KLFNGVFVKSART. Residues 809–829 form a helical membrane-spanning segment; that stretch reads SIYINIYICLLAIELLFLLGI. The Extracellular segment spans residues 830-835; it reads EQTETS. A helical membrane pass occupies residues 836-856; the sequence is IFCGFITVFLHCAILSGTSWF. The Cytoplasmic segment spans residues 857 to 882; it reads CYEAFHSYSTLTSDELLLEVDQTPKV. Residues 883-903 form a helical membrane-spanning segment; it reads NCYYLLSYGLSLSVVAISLVI. At 904 to 927 the chain is on the extracellular side; that stretch reads NPSTYTQNDYCVLMEANAVFYATF. A helical transmembrane segment spans residues 928–948; the sequence is VAPVLIFFMAAIGYTFLSWII. Residues 949–975 are Cytoplasmic-facing; the sequence is MCRKSRTGLKTKEHTRLATVRFDIRCS. A helical membrane pass occupies residues 976 to 996; sequence FVFFLLLSAVWCSAYFYLRGA. The Extracellular portion of the chain corresponds to 997–1003; sequence KMDEDVT. The chain crosses the membrane as a helical span at residues 1004-1024; that stretch reads GIYGYNFICFNTLLGLYIFVF. Residues 1025 to 1693 lie on the Cytoplasmic side of the membrane; that stretch reads HCIQNEKIRR…VRCYLEPLAK (669 aa). The tract at residues 1089–1109 is disordered; the sequence is PLGTNDDAHDEQQQQQHMSAT. Residues Ser1165, Ser1256, and Ser1263 each carry the phosphoserine modification. 4 disordered regions span residues 1237–1264, 1279–1362, 1450–1529, and 1596–1678; these read KPNSQHGKKKRGGVGAIPASPSGSLHSR, KTKP…APPP, SRYG…LPPQ, and SMRG…SAML. Over residues 1307–1323 the composition is skewed to low complexity; it reads QQQQQLRQQRQQQQQQL. Phosphoserine occurs at positions 1324 and 1325. Residues 1337 to 1357 are compositionally biased toward low complexity; sequence LHLQHQQQQQQQRRAGGQQQL. Positions 1464–1475 are enriched in polar residues; the sequence is RNQQQQQHSLAQ. 2 stretches are compositionally biased toward acidic residues: residues 1485-1498 and 1508-1521; these read DEDDDEDEDDEETT and CDEEEEDEESDMED. The span at 1640–1663 shows a compositional bias: low complexity; it reads QQLQKLSPQSTTSSSSHTSHSNPH.

This sequence belongs to the G-protein coupled receptor 2 family. LN-TM7 subfamily. Forms a heterodimer, consisting of a large extracellular region non-covalently linked to a seven-transmembrane moiety. Proteolytically cleaved into 2 subunits, an extracellular subunit and a seven-transmembrane subunit.

It is found in the cell membrane. This Drosophila pseudoobscura pseudoobscura (Fruit fly) protein is Latrophilin Cirl.